Here is a 276-residue protein sequence, read N- to C-terminus: Diaminopimelate epimerase (276 aa).

The substrate site is built by N13, Q46, and N66. The active-site Proton donor is C75. Substrate-binding positions include 76-77 (GN), N159, N192, and 210-211 (ER). C219 acts as the Proton acceptor in catalysis. Position 220–221 (220–221 (GS)) interacts with substrate.

Belongs to the diaminopimelate epimerase family. In terms of assembly, homodimer.

It is found in the cytoplasm. The catalysed reaction is (2S,6S)-2,6-diaminopimelate = meso-2,6-diaminopimelate. Its pathway is amino-acid biosynthesis; L-lysine biosynthesis via DAP pathway; DL-2,6-diaminopimelate from LL-2,6-diaminopimelate: step 1/1. In terms of biological role, catalyzes the stereoinversion of LL-2,6-diaminopimelate (L,L-DAP) to meso-diaminopimelate (meso-DAP), a precursor of L-lysine and an essential component of the bacterial peptidoglycan. In Colwellia psychrerythraea (strain 34H / ATCC BAA-681) (Vibrio psychroerythus), this protein is Diaminopimelate epimerase.